We begin with the raw amino-acid sequence, 269 residues long: MISYPNIDPIAVSIGPISVHWYGIMYLIGFAGAYLCGMYRAKRSNGLWTPEMVSDAIFYGALGVILGGRVGYILFYQFPAFVDNPLILVRIWEGGMSFHGGLLGVIIAMFFFARRYNKHLVDVTDFLAPFVPIGLGAGRLGNFIGGELWGKPTDVSWAMIFPNDPLQLARHPSQLYQFALEGVALFCILWFFSQRTKPRYCVSGMFLLFYGIFRILVEFVREPDIQIGYIAFGWLTEGQLLSLPMVIIGAGLIMAGLKLNTFPKASTSK.

The next 7 membrane-spanning stretches (helical) occupy residues 10–30 (IAVSIGPISVHWYGIMYLIGF), 56–76 (AIFYGALGVILGGRVGYILFY), 91–111 (IWEGGMSFHGGLLGVIIAMFF), 126–146 (FLAPFVPIGLGAGRLGNFIGG), 172–192 (PSQLYQFALEGVALFCILWFF), 200–220 (YCVSGMFLLFYGIFRILVEFV), and 237–257 (EGQLLSLPMVIIGAGLIMAGL). Arg-139 provides a ligand contact to a 1,2-diacyl-sn-glycero-3-phospho-(1'-sn-glycerol).

The protein belongs to the Lgt family.

Its subcellular location is the cell inner membrane. It carries out the reaction L-cysteinyl-[prolipoprotein] + a 1,2-diacyl-sn-glycero-3-phospho-(1'-sn-glycerol) = an S-1,2-diacyl-sn-glyceryl-L-cysteinyl-[prolipoprotein] + sn-glycerol 1-phosphate + H(+). Its pathway is protein modification; lipoprotein biosynthesis (diacylglyceryl transfer). Catalyzes the transfer of the diacylglyceryl group from phosphatidylglycerol to the sulfhydryl group of the N-terminal cysteine of a prolipoprotein, the first step in the formation of mature lipoproteins. In Marinomonas sp. (strain MWYL1), this protein is Phosphatidylglycerol--prolipoprotein diacylglyceryl transferase.